We begin with the raw amino-acid sequence, 434 residues long: ATP-dependent protease ATPase subunit HslU (434 aa).

Residues valine 18, 60 to 65, aspartate 247, glutamate 312, and arginine 384 each bind ATP; that span reads GVGKTE.

Belongs to the ClpX chaperone family. HslU subfamily. In terms of assembly, a double ring-shaped homohexamer of HslV is capped on each side by a ring-shaped HslU homohexamer. The assembly of the HslU/HslV complex is dependent on binding of ATP.

It is found in the cytoplasm. Functionally, ATPase subunit of a proteasome-like degradation complex; this subunit has chaperone activity. The binding of ATP and its subsequent hydrolysis by HslU are essential for unfolding of protein substrates subsequently hydrolyzed by HslV. HslU recognizes the N-terminal part of its protein substrates and unfolds these before they are guided to HslV for hydrolysis. This is ATP-dependent protease ATPase subunit HslU from Bradyrhizobium diazoefficiens (strain JCM 10833 / BCRC 13528 / IAM 13628 / NBRC 14792 / USDA 110).